Reading from the N-terminus, the 78-residue chain is Acyl carrier protein AcpP (78 aa).

Residues 2–77 (SDIAERVKKI…DAVKFIEKAQ (76 aa)) enclose the Carrier domain. Ser-37 bears the O-(pantetheine 4'-phosphoryl)serine mark.

This sequence belongs to the acyl carrier protein (ACP) family. In terms of processing, 4'-phosphopantetheine is transferred from CoA to a specific serine of apo-ACP by AcpS. This modification is essential for activity because fatty acids are bound in thioester linkage to the sulfhydryl of the prosthetic group.

Its subcellular location is the cytoplasm. Its pathway is lipid metabolism; fatty acid biosynthesis. Its function is as follows. Carrier of the growing fatty acid chain in fatty acid biosynthesis. This is Acyl carrier protein AcpP from Agrobacterium fabrum (strain C58 / ATCC 33970) (Agrobacterium tumefaciens (strain C58)).